A 243-amino-acid chain; its full sequence is Phosphate-specific transport system accessory protein PhoU (243 aa).

It belongs to the PhoU family. In terms of assembly, homodimer.

It localises to the cytoplasm. Part of the phosphate (Pho) regulon, which plays a key role in phosphate homeostasis. Encoded together with proteins of the phosphate-specific transport (Pst) system in the polycistronic pstSCAB-phoU operon. PhoU is essential for the repression of the Pho regulon at high phosphate conditions. In this role, it may bind, possibly as a chaperone, to PhoR, PhoB or a PhoR-PhoB complex to promote dephosphorylation of phospho-PhoB, or inhibit formation of the PhoR-PhoB transitory complex. This is Phosphate-specific transport system accessory protein PhoU from Serratia marcescens.